Here is a 738-residue protein sequence, read N- to C-terminus: DNA topoisomerase 4 subunit A (738 aa).

The region spanning 32 to 496 (LPDVRDGLKP…SFEEVDLTNQ (465 aa)) is the Topo IIA-type catalytic domain. Y120 functions as the O-(5'-phospho-DNA)-tyrosine intermediate in the catalytic mechanism.

It belongs to the type II topoisomerase GyrA/ParC subunit family. ParC type 1 subfamily. Heterotetramer composed of ParC and ParE.

The protein localises to the cell membrane. The catalysed reaction is ATP-dependent breakage, passage and rejoining of double-stranded DNA.. Functionally, topoisomerase IV is essential for chromosome segregation. It relaxes supercoiled DNA. Performs the decatenation events required during the replication of a circular DNA molecule. The chain is DNA topoisomerase 4 subunit A from Rickettsia prowazekii (strain Madrid E).